Here is a 508-residue protein sequence, read N- to C-terminus: Photosystem II CP47 reaction center protein (508 aa).

6 helical membrane-spanning segments follow: residues 21-36 (SVHI…WAGS), 101-115 (IVFS…IWHW), 140-156 (GIHL…FGAF), 203-218 (IAAG…FHLS), 237-252 (VLSS…AFVV), and 457-472 (TFAL…HGAR).

The protein belongs to the PsbB/PsbC family. PsbB subfamily. As to quaternary structure, PSII is composed of 1 copy each of membrane proteins PsbA, PsbB, PsbC, PsbD, PsbE, PsbF, PsbH, PsbI, PsbJ, PsbK, PsbL, PsbM, PsbT, PsbX, PsbY, PsbZ, Psb30/Ycf12, at least 3 peripheral proteins of the oxygen-evolving complex and a large number of cofactors. It forms dimeric complexes. Binds multiple chlorophylls. PSII binds additional chlorophylls, carotenoids and specific lipids. is required as a cofactor.

The protein localises to the plastid. The protein resides in the chloroplast thylakoid membrane. One of the components of the core complex of photosystem II (PSII). It binds chlorophyll and helps catalyze the primary light-induced photochemical processes of PSII. PSII is a light-driven water:plastoquinone oxidoreductase, using light energy to abstract electrons from H(2)O, generating O(2) and a proton gradient subsequently used for ATP formation. In Zea mays (Maize), this protein is Photosystem II CP47 reaction center protein.